Here is a 344-residue protein sequence, read N- to C-terminus: Serpentine receptor class delta-3 (344 aa).

The next 7 membrane-spanning stretches (helical) occupy residues 21–41 (IIGY…IILI), 54–74 (MLHL…MLAL), 102–122 (FLHV…MISF), 142–162 (ICIL…SDVA), 203–223 (FSAI…IVFF), 259–279 (IVPI…FQVV), and 287–307 (MPFR…LYFV).

Belongs to the nematode receptor-like protein srd family.

The protein localises to the membrane. This Caenorhabditis elegans protein is Serpentine receptor class delta-3 (srd-3).